The following is a 220-amino-acid chain: Ras-related protein Rab-3A (220 aa).

Positions 31, 32, 33, 34, 35, 36, 37, 48, 49, 53, and 54 each coordinate GTP. A Mg(2+)-binding site is contributed by Thr-36. The Switch 1 motif lies at 49-58; that stretch reads PAFVSTVGID. Residues Thr-54 and Asp-77 each coordinate Mg(2+). Gly-80 provides a ligand contact to GTP. Residues 80–96 carry the Switch 2 motif; it reads GQERYRTITTAYYRGAM. The residue at position 86 (Thr-86) is a Phosphothreonine; by LRRK2. Residues Asn-135, Lys-136, Asp-138, Ala-166, and Lys-167 each contribute to the GTP site. Phosphoserine is present on residues Ser-188 and Ser-190. The disordered stretch occupies residues 194-220; the sequence is ADPAVTGAKQGPQLSDQQVPPHQDCAC. Residues Cys-218 and Cys-220 are each lipidated (S-geranylgeranyl cysteine). Residue Cys-220 is modified to Cysteine methyl ester.

The protein belongs to the small GTPase superfamily. Rab family. Interacts with RIMS1 and RIMS2. Interacts with Rabphilin-3A/RPH3A and Rab effector Noc2/RPH3AL. Interacts with SYTL4. Interacts with RAB3IP. Interacts with SGSM1 and SGSM3. Interacts with SYT1. Interacts with MYH9; this interaction is essential for lysosome exocytosis and plasma membrane repair. Interacts with STXBP1; this interaction promotes RAB3A dissociation from the vesicle membrane. Interacts with SNCA. The GTP-bound form interacts with REP15. Interacts with GDI1, GDI2, CHM and CHML; phosphorylation at Thr-86 disrupts these interactions. Interacts with MADD (via uDENN domain); the GTP-bound form is preferred for interaction. Mg(2+) serves as cofactor. Post-translationally, phosphorylation of Thr-86 in the switch II region by LRRK2 prevents the association of RAB regulatory proteins, including CHM, CHML and RAB GDP dissociation inhibitors GDI1 and GDI2. In terms of tissue distribution, specifically expressed in brain.

It localises to the cytoplasm. Its subcellular location is the cytosol. It is found in the lysosome. The protein localises to the cytoplasmic vesicle. The protein resides in the secretory vesicle. It localises to the cell projection. Its subcellular location is the axon. It is found in the cell membrane. The protein localises to the presynapse. The protein resides in the postsynapse. The catalysed reaction is GTP + H2O = GDP + phosphate + H(+). With respect to regulation, regulated by guanine nucleotide exchange factors (GEFs) including RAB3IL1 and MADD which promote the exchange of bound GDP for free GTP. Regulated by GTPase activating proteins (GAPs) including RAB3GAP1 and TBC1D10B which increase the GTP hydrolysis activity. Inhibited by GDP dissociation inhibitors (GDIs) which prevent Rab-GDP dissociation. Functionally, the small GTPases Rab are key regulators of intracellular membrane trafficking, from the formation of transport vesicles to their fusion with membranes. Rabs cycle between an inactive GDP-bound form and an active GTP-bound form that is able to recruit to membranes different sets of downstream effectors directly responsible for vesicle formation, movement, tethering and fusion. RAB3A plays a central role in regulated exocytosis and secretion. Controls the recruitment, tethering and docking of secretory vesicles to the plasma membrane. Upon stimulation, switches to its active GTP-bound form, cycles to vesicles and recruits effectors such as RIMS1, RIMS2, Rabphilin-3A/RPH3A, RPH3AL or SYTL4 to help the docking of vesicules onto the plasma membrane. Upon GTP hydrolysis by GTPase-activating protein, dissociates from the vesicle membrane allowing the exocytosis to proceed. Stimulates insulin secretion through interaction with RIMS2 or RPH3AL effectors in pancreatic beta cells. Regulates calcium-dependent lysosome exocytosis and plasma membrane repair (PMR) via the interaction with 2 effectors, SYTL4 and myosin-9/MYH9. Acts as a positive regulator of acrosome content secretion in sperm cells by interacting with RIMS1. Also plays a role in the regulation of dopamine release by interacting with synaptotagmin I/SYT. This is Ras-related protein Rab-3A from Homo sapiens (Human).